The sequence spans 424 residues: Adenylosuccinate synthetase (424 aa).

GTP-binding positions include 12–18 (GDEGKGK) and 40–42 (GHT). Asp-13 serves as the catalytic Proton acceptor. Residues Asp-13 and Gly-40 each contribute to the Mg(2+) site. IMP contacts are provided by residues 13–16 (DEGK), 38–41 (NAGH), Thr-130, Arg-144, Asn-220, Thr-235, and Arg-299. His-41 serves as the catalytic Proton donor. Substrate is bound at residue 295 to 301 (VTTGRRR). GTP contacts are provided by residues Arg-301, 327–329 (KLD), and 412–414 (GTG).

The protein belongs to the adenylosuccinate synthetase family. In terms of assembly, homodimer. Mg(2+) serves as cofactor.

It localises to the cytoplasm. It carries out the reaction IMP + L-aspartate + GTP = N(6)-(1,2-dicarboxyethyl)-AMP + GDP + phosphate + 2 H(+). The protein operates within purine metabolism; AMP biosynthesis via de novo pathway; AMP from IMP: step 1/2. Its function is as follows. Plays an important role in the de novo pathway and in the salvage pathway of purine nucleotide biosynthesis. Catalyzes the first committed step in the biosynthesis of AMP from IMP. In Aspergillus flavus (strain ATCC 200026 / FGSC A1120 / IAM 13836 / NRRL 3357 / JCM 12722 / SRRC 167), this protein is Adenylosuccinate synthetase.